The chain runs to 485 residues: Inosine-5'-monophosphate dehydrogenase (485 aa).

2 consecutive CBS domains span residues 99–154 (IVED…LVKE) and 156–215 (MTKD…VRDE). Residues Asp-247 and 294–296 (GIG) contribute to the NAD(+) site. Gly-296 and Gly-298 together coordinate K(+). Ser-299 serves as a coordination point for IMP. K(+) is bound at residue Cys-301. Cys-301 acts as the Thioimidate intermediate in catalysis. Residues 334–336 (DGG), 357–358 (GN), and 381–385 (YRGMG) contribute to the IMP site. Catalysis depends on Arg-397, which acts as the Proton acceptor. Position 412 (Glu-412) interacts with IMP. Residues Glu-466, Ser-467, and His-468 each contribute to the K(+) site.

It belongs to the IMPDH/GMPR family. In terms of assembly, homotetramer. K(+) serves as cofactor.

It carries out the reaction IMP + NAD(+) + H2O = XMP + NADH + H(+). It participates in purine metabolism; XMP biosynthesis via de novo pathway; XMP from IMP: step 1/1. Mycophenolic acid (MPA) is a non-competitive inhibitor that prevents formation of the closed enzyme conformation by binding to the same site as the amobile flap. In contrast, mizoribine monophosphate (MZP) is a competitive inhibitor that induces the closed conformation. MPA is a potent inhibitor of mammalian IMPDHs but a poor inhibitor of the bacterial enzymes. MZP is a more potent inhibitor of bacterial IMPDH. Functionally, catalyzes the conversion of inosine 5'-phosphate (IMP) to xanthosine 5'-phosphate (XMP), the first committed and rate-limiting step in the de novo synthesis of guanine nucleotides, and therefore plays an important role in the regulation of cell growth. This Pyrococcus abyssi (strain GE5 / Orsay) protein is Inosine-5'-monophosphate dehydrogenase.